Reading from the N-terminus, the 70-residue chain is Translation initiation factor IF-1 (70 aa).

The 70-residue stretch at 1–70 (MKETNLSIKG…LTKGRIIYRH (70 aa)) folds into the S1-like domain.

It belongs to the IF-1 family. As to quaternary structure, component of the 30S ribosomal translation pre-initiation complex which assembles on the 30S ribosome in the order IF-2 and IF-3, IF-1 and N-formylmethionyl-tRNA(fMet); mRNA recruitment can occur at any time during PIC assembly.

Its subcellular location is the cytoplasm. One of the essential components for the initiation of protein synthesis. Stabilizes the binding of IF-2 and IF-3 on the 30S subunit to which N-formylmethionyl-tRNA(fMet) subsequently binds. Helps modulate mRNA selection, yielding the 30S pre-initiation complex (PIC). Upon addition of the 50S ribosomal subunit IF-1, IF-2 and IF-3 are released leaving the mature 70S translation initiation complex. This chain is Translation initiation factor IF-1, found in Mycoplasmoides gallisepticum (strain R(low / passage 15 / clone 2)) (Mycoplasma gallisepticum).